We begin with the raw amino-acid sequence, 103 residues long: High-potential iron-sulfur protein (103 aa).

Positions 1-28 are cleaved as a signal peptide; that stretch reads MSNRRLFLKSIPIMAAAGAVGMAGLARA. [4Fe-4S] cluster-binding residues include C66, C69, C82, and C96.

Belongs to the high-potential iron-sulfur protein (HiPIP) family. Homodimer.

The protein resides in the periplasm. Specific class of high-redox-potential 4Fe-4S ferredoxins. Functions in anaerobic electron transport in most purple and in some other photosynthetic bacteria and in at least one genus (Paracoccus) of halophilic, denitrifying bacteria. The polypeptide is High-potential iron-sulfur protein (hip) (Ralstonia nicotianae (strain ATCC BAA-1114 / GMI1000) (Ralstonia solanacearum)).